The sequence spans 283 residues: MVSIIERAPAKINLGLDVLGKREDGYHDLEMVMISIDLCDYVTVSPLKDDVIMIESDCPKMPINEKNDVYKVAKLIKSRYAISEGVSILLNKKIPVCAGMGGGSSDAAATIRALNQLWDLKLSMEEMIAIGIAIGSDVPYCIQAGCAKIGGKGDRIELIDGKLSSWVVLVKPDFGISTRTVFPEIDCDVISRVDISAIVNALEGNNYSDLITHMGNALEDISIARKPFIQKVKDKMVAAGADVALMTGSGPTVFALCQTEKQANRVFNSVKGFCKEVYKVRTL.

Lys11 is an active-site residue. 95-105 is an ATP binding site; sequence PVCAGMGGGSS. Residue Asp137 is part of the active site.

It belongs to the GHMP kinase family. IspE subfamily.

The catalysed reaction is 4-CDP-2-C-methyl-D-erythritol + ATP = 4-CDP-2-C-methyl-D-erythritol 2-phosphate + ADP + H(+). Functionally, catalyzes the phosphorylation of the position 2 hydroxy group of 4-diphosphocytidyl-2C-methyl-D-erythritol. In Streptococcus uberis (strain ATCC BAA-854 / 0140J), this protein is Putative 4-diphosphocytidyl-2-C-methyl-D-erythritol kinase (ispE).